The primary structure comprises 327 residues: 4-hydroxy-2-oxoglutarate aldolase, mitochondrial (327 aa).

A mitochondrion-targeting transit peptide spans 1-25 (MLVPRVWSSVRLGLSRVLSRTLRGW). 77–78 (SN) serves as a coordination point for substrate. The Schiff-base intermediate with substrate role is filled by lysine 196. Substrate is bound by residues serine 198 and glycine 222.

Belongs to the DapA family. Homotetramer.

The protein resides in the mitochondrion. It carries out the reaction (4S)-4-hydroxy-2-oxoglutarate = glyoxylate + pyruvate. It catalyses the reaction (4R)-4-hydroxy-2-oxoglutarate = glyoxylate + pyruvate. With respect to regulation, inhibited by divalent cations. Its function is as follows. Catalyzes the final step in the metabolic pathway of hydroxyproline. This is 4-hydroxy-2-oxoglutarate aldolase, mitochondrial (HOGA1) from Bos taurus (Bovine).